The following is a 209-amino-acid chain: Thymidine kinase (209 aa).

Residues 9-16 (SAMNAGKT) and 88-91 (DEAQ) each bind ATP. The Proton acceptor role is filled by Glu89.

This sequence belongs to the thymidine kinase family. As to quaternary structure, homotetramer.

It localises to the cytoplasm. It catalyses the reaction thymidine + ATP = dTMP + ADP + H(+). The sequence is that of Thymidine kinase from Xanthomonas campestris pv. campestris (strain 8004).